Consider the following 295-residue polypeptide: Ribosomal protein L11 methyltransferase (295 aa).

The S-adenosyl-L-methionine site is built by T138, G161, D183, and N230.

This sequence belongs to the methyltransferase superfamily. PrmA family.

The protein resides in the cytoplasm. It carries out the reaction L-lysyl-[protein] + 3 S-adenosyl-L-methionine = N(6),N(6),N(6)-trimethyl-L-lysyl-[protein] + 3 S-adenosyl-L-homocysteine + 3 H(+). In terms of biological role, methylates ribosomal protein L11. The chain is Ribosomal protein L11 methyltransferase from Bradyrhizobium diazoefficiens (strain JCM 10833 / BCRC 13528 / IAM 13628 / NBRC 14792 / USDA 110).